The sequence spans 264 residues: Pro-opiomelanocortin (264 aa).

Positions 1–26 are cleaved as a signal peptide; that stretch reads MPRSCCSRSGALLLALLLQASMEVRG. Phe-87 is subject to Phenylalanine amide. 2 disordered regions span residues 88-204 and 219-238; these read GRRN…DLEH and RMEHFRWGSPPKDKRYGGFM. The N-linked (GlcNAc...) asparagine glycan is linked to Asn-91. 2 stretches are compositionally biased toward basic and acidic residues: residues 99–122 and 130–142; these read QKREDVAAGEDRGLLPEGGPEPRG and REGKRSYSMEHFR. Glu-131 carries the post-translational modification Glutamic acid 1-amide. Ser-135 is modified (N-acetylserine; in Corticotropin). Val-147 carries the post-translational modification Valine amide. Ser-165 is modified (phosphoserine). The span at 172 to 186 shows a compositional bias: basic and acidic residues; it reads EFKRELTGQRPRAGD. A compositionally biased stretch (low complexity) spans 189 to 199; that stretch reads DGPADDGAGPR. Positions 219–234 are enriched in basic and acidic residues; it reads RMEHFRWGSPPKDKRY.

The protein belongs to the POMC family. Post-translationally, specific enzymatic cleavages at paired basic residues yield the different active peptides. ACTH and MSH are produced by the pituitary gland.

The protein resides in the secreted. In terms of biological role, stimulates the adrenal glands to release cortisol. Anorexigenic peptide. Increases the pigmentation of skin by increasing melanin production in melanocytes. Functionally, increases the pigmentation of skin by increasing melanin production in melanocytes. Its function is as follows. Endogenous orexigenic opiate. In terms of biological role, endogenous opiate. This Macaca nemestrina (Pig-tailed macaque) protein is Pro-opiomelanocortin (POMC).